Here is a 615-residue protein sequence, read N- to C-terminus: Protein DlpA (615 aa).

This sequence belongs to the isocitrate and isopropylmalate dehydrogenases family. To M.jannaschii MJ0644 in the C-terminal section.

This Legionella pneumophila subsp. pneumophila (strain Philadelphia 1 / ATCC 33152 / DSM 7513) protein is Protein DlpA (dlpA).